The following is a 134-amino-acid chain: Thioredoxin H2-2 (134 aa).

A disordered region spans residues 1 to 20 (MGSFFSTMFTPPPAADDGGD). The Thioredoxin domain maps to 3 to 130 (SFFSTMFTPP…LERKVNMFIS (128 aa)). Residues C56 and C59 each act as nucleophile in the active site. The cysteines at positions 56 and 59 are disulfide-linked.

This sequence belongs to the thioredoxin family. Plant H-type subfamily.

The protein resides in the cytoplasm. Its function is as follows. Probable thiol-disulfide oxidoreductase that may be involved in the redox regulation of a number of cytosolic enzymes. In Oryza sativa subsp. japonica (Rice), this protein is Thioredoxin H2-2.